The chain runs to 791 residues: Organellar oligopeptidase A, chloroplastic/mitochondrial (791 aa).

A chloroplast and mitochondrion-targeting transit peptide spans 1–82; sequence MLMATPTSRA…SSPPSMSSAA (82 aa). Coiled coils occupy residues 118–138 and 239–259; these read RPGI…LEKS and DDEK…LSHK. Histidine 571 is a Zn(2+) binding site. Glutamate 572 is an active-site residue. Zn(2+) is bound by residues histidine 575 and glutamate 601. 703-709 is a binding site for substrate; the sequence is HIFAGGY.

This sequence belongs to the peptidase M3 family. Requires Zn(2+) as cofactor.

The protein localises to the mitochondrion matrix. The protein resides in the plastid. It localises to the chloroplast stroma. It catalyses the reaction Hydrolysis of oligopeptides, with broad specificity. Gly or Ala commonly occur as P1 or P1' residues, but more distant residues are also important, as is shown by the fact that Z-Gly-Pro-Gly-|-Gly-Pro-Ala is cleaved, but not Z-(Gly)(5).. Inhibited by salicylic acid. Functionally, oligopeptidase degrading short peptides from 8 to 23 amino acid residues. Plays a role in the degradation of transit peptides and of peptides derived from other proteolytic events. Does not exhibit a strict cleavage pattern. Binds salicylic acid. This chain is Organellar oligopeptidase A, chloroplastic/mitochondrial, found in Arabidopsis thaliana (Mouse-ear cress).